We begin with the raw amino-acid sequence, 204 residues long: Cytochrome P450 monooxygenase PC-23 (204 aa).

Cys-138 is a binding site for heme.

This sequence belongs to the cytochrome P450 family. Heme is required as a cofactor.

Its pathway is secondary metabolite biosynthesis. Functionally, cytochrome P450 monooxygenase; part of the gene cluster that mediates the biosynthesis of the indole diterpenes penitrems. The geranylgeranyl diphosphate (GGPP) synthase penG catalyzes the first step in penitrem biosynthesis via conversion of farnesyl pyrophosphate and isopentyl pyrophosphate into geranylgeranyl pyrophosphate (GGPP). Condensation of indole-3-glycerol phosphate with GGPP by the prenyl transferase penC then forms 3-geranylgeranylindole (3-GGI). Epoxidation by the FAD-dependent monooxygenase penM leads to a epoxidized-GGI that is substrate of the terpene cyclase penB for cyclization to yield paspaline. Paspaline is subsequently converted to 13-desoxypaxilline by the cytochrome P450 monooxygenase penP, the latter being then converted to paxilline by the cytochrome P450 monooxygenase penQ. Paxilline is converted to beta-paxitriol via C-10 ketoreduction by the short-chain dehydrogenase PC-15 which can be monoprenylated at the C-20 by the indole diterpene prenyltransferase penD. A two-step elimination (acetylation and elimination) process performed by the O-acetyltransferase PC-16 and the P.simplicissimum ptmI-ortholog not yet identified in P.crustosum, leads to the production of the prenylated form of penijanthine. The FAD-linked oxidoreductase ptmO then converts the prenylated form of penijanthine into PC-M5 which is in turn transformed into PC-M4 by the aromatic dimethylallyltransferase PC-22. A series of oxidation steps involving 4 cytochrome P450 monooxygenases (PC-21, PC-05, PC-23, PC-20) and a FAD-dependent monooxygenase (PC-14) are required for the transformation of PC-M4 to penitrems A and E. Synthesis of these final products is proposed to proceed via penitrems D and C (PC-21, PC-05, PC-14) and penitrems B and F (PC-21, PC-05, PC-14, PC-23). This Penicillium crustosum (Blue mold fungus) protein is Cytochrome P450 monooxygenase PC-23.